The sequence spans 213 residues: Glycerol-3-phosphate acyltransferase (213 aa).

6 helical membrane passes run 2–22 (ITIV…GLWI), 52–74 (AGMA…PIIF), 81–100 (PLIF…FAGF), 112–132 (VIFG…FGAL), 143–163 (VTAS…GFIL), and 164–184 (SNYD…IIIR).

It belongs to the PlsY family. Probably interacts with PlsX.

The protein localises to the cell membrane. The enzyme catalyses an acyl phosphate + sn-glycerol 3-phosphate = a 1-acyl-sn-glycero-3-phosphate + phosphate. It participates in lipid metabolism; phospholipid metabolism. Catalyzes the transfer of an acyl group from acyl-phosphate (acyl-PO(4)) to glycerol-3-phosphate (G3P) to form lysophosphatidic acid (LPA). This enzyme utilizes acyl-phosphate as fatty acyl donor, but not acyl-CoA or acyl-ACP. This is Glycerol-3-phosphate acyltransferase from Streptococcus pneumoniae (strain ATCC 700669 / Spain 23F-1).